The sequence spans 781 residues: MSVIDSILDKADEQEIKKLNVIVDKIDALEDSMKNLSYEELKDMTAIFKNRLKKGETLDDILPEAFAVVREVSKRKLGMRQYRVQLIGGIVIHQGKIAEMKTGEGKTLVEVAPVYLNALTGKGVHVITVNDYLAERDKELMSPVYESLGMTVGVIISNQDPNIRKQQYKCDITYGTNSEFGFDYLRDNMVPDLSHKVQRELNFAIVDEVDSILIDEARTPLIIAGDGDEDLKLYELANSFVKTVKEEDFELDRKDKTIALTASGISKAESFFGITNLTDIKNIELYHHINQALRGHKLMEKDVDYVISNGEVMIVDEFTGRVMDGRRYTDGLHQAIEAKEGVEIKNESKTMATVTYQNFFRLYEKLSGMTGTAKTEEGEFESIYKLNVVQIPTNRPVIRADLHDKVFKTEEEKYSAVVEEIIRIHKTRQPILVGTVSVEKSEKLSKMLKKQGIKHQVLNAKQHDKEAEIISKAGKLDAITIATNMAGRGTDISLGAGDKEEEQEVKDLGGLYVIGTERHESRRIDNQLRGRSGRQGDPGTSRFFVSLEDDVIKLYGGKTIEKLMKRTSSNENTAIESKALTRAIERAQKGVEGKNFEIRKNVLKYDDTINEQRKVIYNERNKVLNDEDIQEDIQKMVKDIIQEAGETYLIGRKRDYYGYFKHLYSTFMPADTLLIPGVDKKSVQEIIDSTYEISKRVYDLKKMMLGIDKVAELEKTVLLKVVDQYWIDHIDAMEQLKQYIGLKSYAQKDPFKEYALEGYDMFEALNKNIREATVQYLYKFN.

Residues glutamine 85, 103–107 (GEGKT), and aspartate 491 each bind ATP.

The protein belongs to the SecA family. Monomer and homodimer. Part of the essential Sec protein translocation apparatus which comprises SecA, SecYEG and auxiliary proteins SecDF. Other proteins may also be involved.

It is found in the cell membrane. The protein localises to the cytoplasm. It carries out the reaction ATP + H2O + cellular proteinSide 1 = ADP + phosphate + cellular proteinSide 2.. Functionally, part of the Sec protein translocase complex. Interacts with the SecYEG preprotein conducting channel. Has a central role in coupling the hydrolysis of ATP to the transfer of proteins into and across the cell membrane, serving as an ATP-driven molecular motor driving the stepwise translocation of polypeptide chains across the membrane. In Clostridioides difficile (strain 630) (Peptoclostridium difficile), this protein is Protein translocase subunit SecA 2.